A 1216-amino-acid chain; its full sequence is Apical endosomal glycoprotein (1216 aa).

Positions 1–22 (MPLSSHLLPALVLFLAGSSGWA) are cleaved as a signal peptide. Topologically, residues 23-1151 (WVPNHCRSPG…SPGNTAAPGS (1129 aa)) are extracellular. An LDL-receptor class A 1; truncated domain is found at 26 to 53 (NHCRSPGQAVCNFVCDCRDCSDEAQCGY). The 159-residue stretch at 64 to 222 (FACDFEQDPC…DDLEFWDCGL (159 aa)) folds into the MAM 1 domain. Asparagine 203 carries an N-linked (GlcNAc...) asparagine glycan. Residues 228-266 (NCPPGHHHCQNKVCVEPQQLCDGEDNCGDLSDENPLTCG) enclose the LDL-receptor class A 2 domain. 3 disulfide bridges follow: cysteine 229–cysteine 241, cysteine 236–cysteine 254, and cysteine 248–cysteine 265. The 157-residue stretch at 269–425 (IATDFETGLG…DLILSDHCRP (157 aa)) folds into the MAM 2 domain. Residues 280-307 (WNRSEGWSRNHRAGGPERPSWPRRDHSR) are disordered. N-linked (GlcNAc...) asparagine glycosylation is found at asparagine 281 and asparagine 339. Residues 429–455 (VSTLQPLPPGPRAPAPQPLPPSSRLQD) form a disordered region. Pro residues predominate over residues 434–449 (PLPPGPRAPAPQPLPP). Positions 456–491 (SCKQGHLACGDLCVPPEQLCDFEEQCAGGEDEQACG) constitute an LDL-receptor class A 3 domain. Intrachain disulfides connect cysteine 457–cysteine 468, cysteine 464–cysteine 481, and cysteine 475–cysteine 490. MAM domains lie at 491-644 (GTTD…DCSP), 654-809 (VSCN…PCWA), 811-969 (NYCS…PCPQ), and 971-1138 (GSCD…HCQQ). Asparagine 583 and asparagine 636 each carry an N-linked (GlcNAc...) asparagine glycan. N-linked (GlcNAc...) asparagine glycosylation is present at asparagine 835. Residues 1152–1172 (VPAVVGSALLLLMLLVLLGLG) form a helical membrane-spanning segment. Topologically, residues 1173-1216 (GRRWLQKKGSCPFQSNTEATAPGFDNILFNADGVTLPASVTSDP) are cytoplasmic.

It localises to the membrane. Probably involved in the sorting and selective transport of receptors and ligands across polarized epithelia. The chain is Apical endosomal glycoprotein from Homo sapiens (Human).